The sequence spans 399 residues: Fluconazole resistance protein 3 (399 aa).

Disordered regions lie at residues 1–21 and 103–197; these read MNFK…SKAF and HPYI…EKDA. Residues 103-145 are compositionally biased toward polar residues; that stretch reads HPYITNTNNHLSYSNSSEEFSPIGNNMSPDSTGGANSNNFTSG. Residues 167 to 184 are compositionally biased toward low complexity; sequence SGNNNNNNGTSRSSQSSS. In terms of domain architecture, bZIP spans 210–273; sequence EELQMKRKAQ…ISIATENEIL (64 aa). Residues 215-234 are basic motif; the sequence is KRKAQNRAAQRAFRERKESK. Residues 235–242 are leucine-zipper; that stretch reads LKELEAKL.

The protein belongs to the bZIP family.

It is found in the nucleus. Transcription factor that confers fluconazole resistance in S.cerevisiae by activation of the PDR5 gene. Can also activate the transcription of S.cerevisiae genes involved in 4-nitroquinoline-N-oxide resistance. This Candida albicans (Yeast) protein is Fluconazole resistance protein 3 (FCR3).